The following is a 273-amino-acid chain: 3-methyl-2-oxobutanoate hydroxymethyltransferase (273 aa).

The Mg(2+) site is built by Asp53 and Asp92. Residues 53 to 54 (DS), Asp92, and Lys122 contribute to the 3-methyl-2-oxobutanoate site. Residue Glu124 coordinates Mg(2+). Residue Glu191 is the Proton acceptor of the active site.

This sequence belongs to the PanB family. In terms of assembly, homodecamer; pentamer of dimers. It depends on Mg(2+) as a cofactor.

Its subcellular location is the cytoplasm. The catalysed reaction is 3-methyl-2-oxobutanoate + (6R)-5,10-methylene-5,6,7,8-tetrahydrofolate + H2O = 2-dehydropantoate + (6S)-5,6,7,8-tetrahydrofolate. Its pathway is cofactor biosynthesis; (R)-pantothenate biosynthesis; (R)-pantoate from 3-methyl-2-oxobutanoate: step 1/2. Its function is as follows. Catalyzes the reversible reaction in which hydroxymethyl group from 5,10-methylenetetrahydrofolate is transferred onto alpha-ketoisovalerate to form ketopantoate. The sequence is that of 3-methyl-2-oxobutanoate hydroxymethyltransferase from Porphyromonas gingivalis (strain ATCC 33277 / DSM 20709 / CIP 103683 / JCM 12257 / NCTC 11834 / 2561).